Here is a 218-residue protein sequence, read N- to C-terminus: Adenylate kinase (218 aa).

Residue 14–19 (GAGKGT) participates in ATP binding. Residues 34-63 (STGDMFRAAIKAGTELGKQAKALMDEGKLV) form an NMP region. Residues Thr35, Arg40, 61 to 63 (KLV), 89 to 92 (GFPR), and Gln96 contribute to the AMP site. Residues 126 to 163 (GRRVHQASGRSYHIVYNPPKVEGKDDVTGEDLIIRADD) form an LID region. ATP-binding positions include Arg127 and 136-137 (SY). Residues Arg160 and Arg171 each coordinate AMP. Lys204 is a binding site for ATP.

This sequence belongs to the adenylate kinase family. As to quaternary structure, monomer.

It localises to the cytoplasm. It carries out the reaction AMP + ATP = 2 ADP. It participates in purine metabolism; AMP biosynthesis via salvage pathway; AMP from ADP: step 1/1. Catalyzes the reversible transfer of the terminal phosphate group between ATP and AMP. Plays an important role in cellular energy homeostasis and in adenine nucleotide metabolism. This chain is Adenylate kinase, found in Mannheimia succiniciproducens (strain KCTC 0769BP / MBEL55E).